The following is a 3176-amino-acid chain: MSNGDWGQSQRPRGTGPMRGIRTMDVNAPGGGSGGSALRILGTASCNQAHCKFGRFAGIQCVSNCVLYLVKSFLAGRPLTSRPELDEVLDEGARLDALMRQSGILKGHEMAQLTDVPSSVVLRGGGRVHIYRSAEIFGLVLFPAQIANSAVVQSLAEVLHGSYNGVAQFILYICDIYAGGIIIETDGSFYLFDPHCQKDAAPGTPAHVRVSTYAHDILQYVGAPGAQYTCVHLYFLPEAFETEDPRIFMLEHYGVYDFYEANGSGFDLVGPELVSSDGEAAGTPDADSSPPVMLPFERRIIPYNLRPLPSRSFTSDSFPAARYSPAKTNSPPPSPASAAPASAAPASAAPASAAPASAAQASVAPASVAPASAAPASAAPDSAAPASSPPLFIPIPGLGHTPGVPAPSTPPRASGSAAPQTPKRKKGLGKDSPHKKPTSGRRLPLSSTTDTEDDQLPRPPVPPHRPPSAARLPPPVIPIPHQSPPASPTPRRAPVSTIAPSVTPSPRLPLQIPIPLPQAAPSNPEIPLTTPSPSPTAAAAPTATTLSPPPTQQQPLQSAAPAPSPPPTQQQPPQSAAPAPSPLLPQQQPPPSAAPAPSPLLPQQQPPPSAARAPSPLPPQQQPLPSATPAPPPAQQLPPSATTLEPEKNNPSAADRAGTEISPSPPFGQQPSFGDDASGGSGLVRYLSDLEEPFLSMSDSEEAESDLASDIPTTEDEDMFEDEVFSNSLESGSSAPTSPITLDTARSQYYQTTFDIETPEMDFVPLESNIARIAGHTYQEQAIVYDPASNREVPEADALSMIDYLLVTVVLEQGLIRSRDRSAVLNLLEFLKDWSGHLQVPTLDLEQLLTSELNIQNLANMLSENKGRAGEFHEHLAAKLEACLPSLATKDAVRVDAGAKMLAEIPQLAESDDGKFDLEAARRRLTDLLSGGDQEGEEGGGEPEDHSIYRGPHVDVPLVLDDESWKRLLSLAEAARTAVARQQAGVDEEDVRFLALLTAIEYGAPPAASVPPFVHNVAVRSKNAALHVRRCTADIRDKVASAASDYLSYLEDPSLPTVMDFDDLLTHLRHTCQIIASLPLLNIRYTSIEWDYRELLYLGTALSDMSGIPWPLERVEEDDPSIAPLPEFETVAKKQKELETTRENEKRLRTILDDIEAMLGLAGVASAPGAPISPASPSATPANHDNPEATPPLADTAALTIPVIEKYIANAGSIVGAAKNPTYIRLRDTIQQIVRSKKYLMNILKSITFYTIDNYIASFEESIDHLYRDLPVLDPEVQDGIDRILDPMVSEALHTFEMGNRLTLEPARLVALQNFATHSTLKETAAAVNLLPGLLAVYDATVTGQAPEDALRLLSGLQNQLSQTLIPGKLKKRFLSYLQKLKNNNNDQLRQKEVQAWRLEAEGFKPATEEQLEAFLDTAPNKELKRQYEKKLRQLMETGRKEKEKLREQEDKERRERRAREANEAWARIRKALGARPEPAPTSPDDWNTLLASLLPDNTDSAAAAAAAVARNTDILDSLTQILAAMLLGITRVRRERLRSLLVDDGGAAERMEAAEPGWFTDIETGPLARLDAWPATPAATAKEGGGGRGAEEAAGALFRARTAADAIRSALAQTRQALQSPDMKSAVVNTDLEAPYAEYERGLAGLLEKRRAAEAALTAIVSEYVDRTLPEATNDPGQANLPPPPTIPQATAPPRLASDLALWPKKPQLLTRRERDDLLQATGDFFSELLTEAEAAEVRALEEQVRESQTLMAKAHEMAASTRRGFHTALEAVLSRSRDEAPDDELRSLLPSPPKAPVQAPLEAALARAAAGNGSWPYRKSLAAAKWIRGICEAVRGLSEGALALAGGAGAWLNLAAAADGEIHELTRLLEVEGMAQNSMDGMEELRLALATLDPKRVAGGKETVADWKRRLSRLEAIIQEAQEESQLQGTLQDLVTQARGHTDPRQLKIVVEAARGLALGASAGSQYALLKDKLLRYASAKQSFLAFYETAQPTVFVKHPLTNNLPLLITISAPPTGWGNGAPTRRAQFLAAAGPAKYAGTLWLETESPCDPLNPAYVSADTQEPLNYIPVYHNFLEYVMPTVLENPEAFSLTPAGRPQAIGPPQDDQERRRRTLASVASARLSAAAADSYWDTWPDVESNAGELLREYVSAPKALMEDLADNPIVAMTLLAHASLIASRNHPPYPAPATDREVILLEQREIMALLVGTHPAYAAAFLGAPSFYAGLGLVSALARDGGLGDLLSDSVLTYRLVRSPASGRGGMPSTTRGSDDGEDARRLTRHRIAGPPTGFIFFQDAWEEMDTRAALWPHPEFLGLVHNQSTARARACMLLLARRCFAPEALQQLWHSLRPLEGPVAFQDYLRDFVKQAYTRGEELPRAEGLEVPRETPSSYGTVTGRALRNLMPYGTPITGPKRGSGDTIPVSVFEAAVAAAFLGRPLTLFVSSQYLFNLKTLGQVRVVAPLLYCDGHSEPFRSLVETISLNFLQDLDGYSESFEPEMSIFARQAVWLRELLTEARAAKPKEARPPTVAILANRKNIIWKCFTYRHNLPDVQFYFNAAGASRWPTDVLNPSFYEHEDPPLPVGYQLPPNPRNVQELFSGFPPRVGHGLVSGDGFQSADNTPASSDRLQQLGGGETDQGEEGSTTAESEASGPPSPQSPLLEKVAPGRPRDWLSPTSSPRDVTVTPGLAAPITLPGPRLMARPYFGAETRASESPDRSPGTSPRPWPKDSLELLPQPAPQQPPSSPWASEQGPIVYTLSPHSTPSTASGSQKKHTIQIPGLVPSQKPSYPPSAPYKPGQSTGGIAPTPSAASLTTFGLQPQDTQASSQDPPYGHSIMQREKKQQGGREEAAEIRPSATRLPTAVGLRPRAPVVAAGAAASATPAFDPGEAPSGLPIPQAPALGSGLAAPAHTPVGALAPSPQKTQAQRPQDAAALPTPTIKAVGARPVPKATGALAAGARPRGQPTAAPPSAASPPRVSLPVRSRQQQSPAIPLPPMHSGSEPGARPEVRLSQYRHAGPQTYTVQKEAPPSAASQLPKMPKCKDSMYYPPSGSARYPAPFQALSFSQSVASPAPSSDQTTLLWNTPSVVTQFLSIEDIIREVVTGGSTSGDLVVPSGSPSSLSTAAPEQDLRYSLTLSQASRVLSRFVSQLRRKLERSTHRLIADLERLKFLYL.

Over residues 1–12 the composition is skewed to polar residues; that stretch reads MSNGDWGQSQRP. A disordered region spans residues 1–28; that stretch reads MSNGDWGQSQRPRGTGPMRGIRTMDVNA. The interval 1-268 is deubiquitination activity; the sequence is MSNGDWGQSQ…YEANGSGFDL (268 aa). The Peptidase C76 domain maps to 41–258; it reads LGTASCNQAH…MLEHYGVYDF (218 aa). Active-site residues include cysteine 61, aspartate 193, and histidine 195. A disordered region spans residues 319–342; the sequence is PAARYSPAKTNSPPPSPASAAPAS. 5 repeat units span residues 335-339, 340-344, 345-349, 350-354, and 355-359. A 10 X 5 AA approximate repeats of P-A-S-A-A region spans residues 335 to 384; sequence PASAAPASAAPASAAPASAAPASAAQASVAPASVAPASAAPASAAPDSAA. A 6; approximate repeat occupies 360-364; it reads QASVA. One copy of the 7; approximate repeat lies at 365-369; the sequence is PASVA. Tandem repeats lie at residues 370 to 374 and 375 to 379. Residues 376–386 show a composition bias toward low complexity; sequence ASAAPDSAAPA. 6 disordered regions span residues 376 to 683, 928 to 950, 1170 to 1193, 1435 to 1461, 2610 to 3008, and 3023 to 3043; these read ASAA…GSGL, LLSGGDQEGEEGGGEPEDHSIYR, APISPASPSATPANHDNPEATPPL, LMETGRKEKEKLREQEDKERRERRARE, GLVS…PGAR, and TYTVQKEAPPSAASQLPKMPK. The 10; approximate repeat unit spans residues 380–384; that stretch reads PDSAA. Residues 457-488 are compositionally biased toward pro residues; the sequence is PRPPVPPHRPPSAARLPPPVIPIPHQSPPASP. A compositionally biased stretch (low complexity) spans 519–546; that stretch reads AAPSNPEIPLTTPSPSPTAAAAPTATTL. The span at 579 to 636 shows a compositional bias: pro residues; sequence APSPLLPQQQPPPSAAPAPSPLLPQQQPPPSAARAPSPLPPQQQPLPSATPAPPPAQQ. The interval 581-611 is interaction with inner tegument protein; that stretch reads SPLLPQQQPPPSAAPAPSPLLPQQQPPPSAA. Residues 1170-1182 are compositionally biased toward low complexity; it reads APISPASPSATPA. A compositionally biased stretch (polar residues) spans 2619–2630; the sequence is SADNTPASSDRL. The segment covering 2643–2654 has biased composition (low complexity); that stretch reads EGSTTAESEASG. The segment covering 2738-2747 has biased composition (pro residues); that stretch reads QPAPQQPPSS. Polar residues-rich tracts occupy residues 2761–2772 and 2811–2831; these read SPHSTPSTASGS and SAASLTTFGLQPQDTQASSQD. Over residues 2839 to 2854 the composition is skewed to basic and acidic residues; that stretch reads MQREKKQQGGREEAAE. 2 stretches are compositionally biased toward low complexity: residues 2872-2886 and 2901-2912; these read APVVAAGAAASATPA and APALGSGLAAPA.

It belongs to the herpesviridae large tegument protein family. As to quaternary structure, interacts with host CUL1 and CUL4A; these interactions inhibit the E3 ligase activity of cullins. Interacts with inner tegument protein. Interacts with capsid vertex specific component CVC2. Interacts with the major capsid protein/MCP. Interacts with host TRIM25 and YWHAZ.

The protein resides in the virion tegument. It is found in the host cytoplasm. Its subcellular location is the host nucleus. It carries out the reaction Thiol-dependent hydrolysis of ester, thioester, amide, peptide and isopeptide bonds formed by the C-terminal Gly of ubiquitin (a 76-residue protein attached to proteins as an intracellular targeting signal).. In terms of biological role, large tegument protein that plays multiple roles in the viral cycle. During viral entry, remains associated with the capsid while most of the tegument is detached and participates in the capsid transport toward the host nucleus. Plays a role in the routing of the capsid at the nuclear pore complex and subsequent uncoating. Within the host nucleus, acts as a deneddylase and promotes the degradation of nuclear CRLs (cullin-RING ubiquitin ligases) and thereby stabilizes nuclear CRL substrates, while cytoplasmic CRLs remain unaffected. These modifications prevent host cell cycle S-phase progression and create a favorable environment allowing efficient viral genome replication. Participates later in the secondary envelopment of capsids. Indeed, plays a linker role for the association of the outer viral tegument to the capsids together with the inner tegument protein. Counteracts host TLR-mediated NF-kappa-B activation through both MYD88 and TICAM1-dependent pathways by interfering with 'Lys-63'- and 'Lys-48'-linked ubiquitination of signaling intermediates such as TRAF6 and IKBKG. Inhibits type I interferon production by forming a tri-molecular complex with host TRIM25 and 14-3-3 thereby promoting TRIM25 autoubiquitination and sequestration of the ligase into inactive protein aggregates. In turn, host RIGI is recruited to the complex but ubiquitination is severely impaired leading to inhibition of the pathway. Also catalyzes the removal of 'Lys-48'- and 'Lys-63'-linked ubiquitin chains on host TBK1 and STING1 suppressing cGAS-STING signaling in addition to the RIGI-MAVS pathway. Inhibits selective autophagy by deubiquitinating host SQSTM1. In turn, decreased SQSTM1 ubiquitination fails to recruit LC3 to SQSTM1-positive aggregates. In the host nucleus, deubiquitinates topoisomerase II subunits TOP2A and TOP2B thereby stabilizing SUMOylated TOP2 which halts the DNA damage response to TOP2-induced double strand DNA breaks and promotes cell survival. The chain is Large tegument protein deneddylase from Homo sapiens (Human).